We begin with the raw amino-acid sequence, 158 residues long: Auxin-responsive protein IAA31 (158 aa).

Residues 1-40 (MEVSNSCSSFSSSSVDSTKPSPSESSVNLSLSLTFPSTSP) show a composition bias toward low complexity. A disordered region spans residues 1 to 49 (MEVSNSCSSFSSSSVDSTKPSPSESSVNLSLSLTFPSTSPQREARQDWP). Positions 29-33 (LSLSL) match the EAR-like (transcriptional repression) motif. In terms of domain architecture, PB1 spans 72–157 (SLFVKVYMEG…RRLKITRPER (86 aa)).

Belongs to the Aux/IAA family. Homodimers and heterodimers.

It localises to the nucleus. In terms of biological role, aux/IAA proteins are short-lived transcriptional factors that function as repressors of early auxin response genes at low auxin concentrations. Repression is thought to result from the interaction with auxin response factors (ARFs), proteins that bind to the auxin-responsive promoter element (AuxRE). Formation of heterodimers with ARF proteins may alter their ability to modulate early auxin response genes expression. The polypeptide is Auxin-responsive protein IAA31 (IAA31) (Arabidopsis thaliana (Mouse-ear cress)).